The sequence spans 244 residues: MSDSAEMQQPELLLKSMNKLNGYHPQLIIPKKTLFKCDLDDKQSRLQVSSMHMENSGFLTEDEKRTIEAQKMKKRRTAGLRVAFIDPESQQYVLELHKWTKSYAFVKGWNKVVDKNDKTFKVGDVFSLWVFRCGGVNPVHDGVNLSGGHADSVVDGLEQGSLCFVLVPAKVSVHDGNLPQDSGHDGHNDNLPQDSVEPSSFFDESYELNHLFFDQEDSQGYLPDEDEDFGFNDDGSIRDSGHYQ.

The TF-B3 DNA-binding region spans 49–147 (SSMHMENSGF…PVHDGVNLSG (99 aa)). Disordered stretches follow at residues 175-196 (DGNLPQDSGHDGHNDNLPQDSV) and 217-244 (DSQGYLPDEDEDFGFNDDGSIRDSGHYQ). Basic and acidic residues predominate over residues 235–244 (GSIRDSGHYQ).

It localises to the nucleus. This chain is Putative B3 domain-containing protein At2g31460, found in Arabidopsis thaliana (Mouse-ear cress).